The primary structure comprises 174 residues: RxLR effector protein 207 (174 aa).

A signal peptide spans 1–20 (MSKVFLLLVLSVFALVSCDA). Positions 46-62 (RMLRAQEEPTNAADEER) match the RxLR-dEER motif. Residues 82 to 99 (VTNSKLVQSMNNKLASLT) form a disordered region.

It belongs to the RxLR effector family. Interacts with Nicotiana benthamiana ACD11, BPA1 (binding partner of ACD11), as well as BPA-like proteins BPL1, BPL2, BPL3 and BPL4.

It is found in the secreted. The protein localises to the host cell membrane. Functionally, secreted effector that activates ROS-mediated cell death in plant host and is essential for virulence. Plays a role in the transition from the biotrophic to necrotrophic stage. Associates with and promotes the degradation of Nicotiana benthamiana BPA1, BPL1, BPL2, and BPL4 to disrupt ACD11 stabilization in a 26S proteasome-dependent manner. The chain is RxLR effector protein 207 from Phytophthora capsici.